The primary structure comprises 211 residues: Thymidylate kinase (211 aa).

Residue 7 to 14 (GIDASGKS) participates in ATP binding.

The protein belongs to the thymidylate kinase family.

The catalysed reaction is dTMP + ATP = dTDP + ADP. Phosphorylation of dTMP to form dTDP in both de novo and salvage pathways of dTTP synthesis. The sequence is that of Thymidylate kinase from Mesomycoplasma hyopneumoniae (strain 232) (Mycoplasma hyopneumoniae).